Here is a 207-residue protein sequence, read N- to C-terminus: Glycerol-3-phosphate acyltransferase 1 (207 aa).

The next 5 membrane-spanning stretches (helical) occupy residues 3 to 23, 53 to 73, 85 to 105, 127 to 147, and 154 to 174; these read YVIA…QIVG, IVVA…LLIL, HIYI…PITM, IALI…YLAV, and ISFL…IVVG.

This sequence belongs to the PlsY family. As to quaternary structure, probably interacts with PlsX.

It is found in the cell membrane. It carries out the reaction an acyl phosphate + sn-glycerol 3-phosphate = a 1-acyl-sn-glycero-3-phosphate + phosphate. It functions in the pathway lipid metabolism; phospholipid metabolism. Catalyzes the transfer of an acyl group from acyl-phosphate (acyl-PO(4)) to glycerol-3-phosphate (G3P) to form lysophosphatidic acid (LPA). This enzyme utilizes acyl-phosphate as fatty acyl donor, but not acyl-CoA or acyl-ACP. In Oceanobacillus iheyensis (strain DSM 14371 / CIP 107618 / JCM 11309 / KCTC 3954 / HTE831), this protein is Glycerol-3-phosphate acyltransferase 1.